The following is a 179-amino-acid chain: Large ribosomal subunit protein uL6 (179 aa).

This sequence belongs to the universal ribosomal protein uL6 family. Part of the 50S ribosomal subunit.

This protein binds to the 23S rRNA, and is important in its secondary structure. It is located near the subunit interface in the base of the L7/L12 stalk, and near the tRNA binding site of the peptidyltransferase center. This is Large ribosomal subunit protein uL6 from Prochlorococcus marinus (strain MIT 9515).